The primary structure comprises 230 residues: 2-C-methyl-D-erythritol 4-phosphate cytidylyltransferase (230 aa).

The protein belongs to the IspD/TarI cytidylyltransferase family. IspD subfamily.

It carries out the reaction 2-C-methyl-D-erythritol 4-phosphate + CTP + H(+) = 4-CDP-2-C-methyl-D-erythritol + diphosphate. It functions in the pathway isoprenoid biosynthesis; isopentenyl diphosphate biosynthesis via DXP pathway; isopentenyl diphosphate from 1-deoxy-D-xylulose 5-phosphate: step 2/6. In terms of biological role, catalyzes the formation of 4-diphosphocytidyl-2-C-methyl-D-erythritol from CTP and 2-C-methyl-D-erythritol 4-phosphate (MEP). The polypeptide is 2-C-methyl-D-erythritol 4-phosphate cytidylyltransferase (Nocardia farcinica (strain IFM 10152)).